The sequence spans 341 residues: MTCTILVGGQWGDEGKGKCITYFCTQDKPEIIARAGVGPNAGHSVEFNGEKYGLRLTPSGFFNKEARLLIGAGVLVNPEVFEHELEYLSKYAVEGRTFMDANCAIITDKHTKQDKDSAYLSKKIGTTGSGCGPANADRINRTIDYAKDVPELEKYITDVPSEINKAIDEGKDVFIEGSQGFGLSLYYGTYPYVTSKDTCASTAAADVGVGPTKVDEVIVIFKSYITRVGEGPFPTEISPEEAEKMGIEEYGVVTGRKRRVGLFDKDFAKRSCMINGATQIALTCIDRLYPECAKVNKYEDLSQEARDYIEDIEENVGVPITIISTGPDLADTIDLRNEKLN.

Residues 12-18 (GDEGKGK) and 42-44 (GHS) contribute to the GTP site. Aspartate 13 (proton acceptor) is an active-site residue. Mg(2+) is bound by residues aspartate 13 and glycine 42. IMP is bound by residues 13 to 16 (DEGK), 40 to 43 (NAGH), threonine 127, arginine 141, glutamine 179, threonine 194, and arginine 256. Histidine 43 acts as the Proton donor in catalysis. Residue 252–258 (VVTGRKR) participates in substrate binding. Residues arginine 258, 284-286 (CID), and 324-326 (STG) contribute to the GTP site.

It belongs to the adenylosuccinate synthetase family. In terms of assembly, homodimer. Mg(2+) is required as a cofactor.

Its subcellular location is the cytoplasm. The enzyme catalyses IMP + L-aspartate + GTP = N(6)-(1,2-dicarboxyethyl)-AMP + GDP + phosphate + 2 H(+). It functions in the pathway purine metabolism; AMP biosynthesis via de novo pathway; AMP from IMP: step 1/2. In terms of biological role, plays an important role in the de novo pathway of purine nucleotide biosynthesis. Catalyzes the first committed step in the biosynthesis of AMP from IMP. This is Adenylosuccinate synthetase from Methanosphaera stadtmanae (strain ATCC 43021 / DSM 3091 / JCM 11832 / MCB-3).